The chain runs to 229 residues: Germin-like protein subfamily 1 member 7 (229 aa).

The first 24 residues, 1 to 24 (MEGFLRFLVAKAILLALASSFVSC), serve as a signal peptide directing secretion. Residues Cys-34 and Cys-50 are joined by a disulfide bond. The 152-residue stretch at 64–215 (SGLNIAGNTI…AFQLDVNVVK (152 aa)) folds into the Cupin type-1 domain. N-linked (GlcNAc...) asparagine glycosylation is present at Asn-79. Mn(2+) contacts are provided by His-112, His-114, Glu-119, and His-161.

This sequence belongs to the germin family. As to quaternary structure, oligomer (believed to be a pentamer but probably hexamer).

Its subcellular location is the secreted. The protein localises to the extracellular space. It is found in the apoplast. Its function is as follows. May play a role in plant defense. Probably has no oxalate oxidase activity even if the active site is conserved. The polypeptide is Germin-like protein subfamily 1 member 7 (Arabidopsis thaliana (Mouse-ear cress)).